The chain runs to 366 residues: Probable S-adenosyl-L-methionine-binding protein AF_0433 (366 aa).

In terms of domain architecture, TsaA-like spans 6 to 136 (LRQVGVIRSP…YSSTIDSVGN (131 aa)). Residues 23-25 (PHQ), 61-62 (DR), arginine 85, and 116-119 (LDGT) contribute to the S-adenosyl-L-methionine site.

This sequence belongs to the tRNA methyltransferase O family.

In Archaeoglobus fulgidus (strain ATCC 49558 / DSM 4304 / JCM 9628 / NBRC 100126 / VC-16), this protein is Probable S-adenosyl-L-methionine-binding protein AF_0433.